A 269-amino-acid polypeptide reads, in one-letter code: MPGVETIKSSWADEVELDYGGLPPTTETVENGQKYVTEYKYNKDDKKTKVVRTYKISKQVVPKTVAKRRTWTKFGDSKNDKPGPNSQTTMVSEEIIMQFLNSKEDEKANDPLLDPTKNIAKCRICNGEHWSVNCPYKGTAMDTNMMEKKASAAAAAAVDAPKSGKYVPPFLKDSQKGALGMRGRDDTAAIRISNLSESMTEADLEELVKKIGPQSKMYLARDKNTGLCKGFAYVHFKQRKDAAAAIEILNGHGYDHLILSVEWSKPQNN.

The RRM domain occupies 188–266 (AAIRISNLSE…LILSVEWSKP (79 aa)). Ser198 carries the phosphoserine modification.

It belongs to the eIF-3 subunit G family. Component of the eukaryotic translation initiation factor 3 (eIF-3) complex. The eIF-3 complex interacts with pix.

It is found in the cytoplasm. Functionally, RNA-binding component of the eukaryotic translation initiation factor 3 (eIF-3) complex, which is involved in protein synthesis of a specialized repertoire of mRNAs and, together with other initiation factors, stimulates binding of mRNA and methionyl-tRNAi to the 40S ribosome. The eIF-3 complex specifically targets and initiates translation of a subset of mRNAs involved in cell proliferation. This subunit can bind 18S rRNA. The sequence is that of Eukaryotic translation initiation factor 3 subunit G-1 from Drosophila melanogaster (Fruit fly).